Reading from the N-terminus, the 282-residue chain is DNA-binding transcriptional repressor YiaJ (282 aa).

The span at 1–20 (MGKEVMGKKENEMAQEKERP) shows a compositional bias: basic and acidic residues. The interval 1–21 (MGKEVMGKKENEMAQEKERPA) is disordered. Residues 23 to 85 (SQSLFRGLML…PAAGSYRLTT (63 aa)) enclose the HTH iclR-type domain. The H-T-H motif DNA-binding region spans 45 to 64 (LAHLSELAGLNKSTVHRLLQ). In terms of domain architecture, IclR-ED spans 100 to 272 (IIHIAAPHLE…AQAISNELGF (173 aa)).

Its function is as follows. Negatively controls the transcription of the yiaKLMNOPQRS operon, which may be involved in the utilization of 2,3-diketo-L-gulonate. The sequence is that of DNA-binding transcriptional repressor YiaJ (yiaJ) from Escherichia coli (strain K12).